A 160-amino-acid polypeptide reads, in one-letter code: Large ribosomal subunit protein uL15 (160 aa).

The span at 1–13 (MKLHELSDNDGAA) shows a compositional bias: basic and acidic residues. Positions 1–42 (MKLHELSDNDGAAKKRKRVGRGPGSGTGKMGGRGIKGQKSRS) are disordered. Residues 21-35 (RGPGSGTGKMGGRGI) are compositionally biased toward gly residues.

This sequence belongs to the universal ribosomal protein uL15 family. Part of the 50S ribosomal subunit.

In terms of biological role, binds to the 23S rRNA. The protein is Large ribosomal subunit protein uL15 of Roseobacter denitrificans (strain ATCC 33942 / OCh 114) (Erythrobacter sp. (strain OCh 114)).